We begin with the raw amino-acid sequence, 240 residues long: 14-3-3 protein 3 (240 aa).

This sequence belongs to the 14-3-3 family. As to quaternary structure, interacts with coactosin. Interacts with ACTO/actophorin.

Its subcellular location is the cytoplasm. It localises to the cell projection. The protein resides in the phagocytic cup. Its function is as follows. Adapter protein which is required for phagocytosis and motility, probably by regulating actin cytoskeleton dynamics. During phagocytosis, plays a role in the initiation and/or formation of the phagocytic cup and is involved in the recruitment of the actin binding protein coactosin to the phagocytic cup. The sequence is that of 14-3-3 protein 3 from Entamoeba histolytica (strain ATCC 30459 / HM-1:IMSS / ABRM).